The primary structure comprises 206 residues: Probable GTP-binding protein EngB (206 aa).

Residues 8-195 (RSDEVVLVGR…EDAVNSHFDA (188 aa)) form the EngB-type G domain. GTP-binding positions include 16–23 (GRSNVGKS), 41–45 (GVTRQ), 60–63 (DLPG), 140–143 (NKMD), and 175–177 (ITA). S23 and T43 together coordinate Mg(2+).

It belongs to the TRAFAC class TrmE-Era-EngA-EngB-Septin-like GTPase superfamily. EngB GTPase family. Requires Mg(2+) as cofactor.

Necessary for normal cell division and for the maintenance of normal septation. This Halobacterium salinarum (strain ATCC 29341 / DSM 671 / R1) protein is Probable GTP-binding protein EngB.